The following is a 122-amino-acid chain: Large ribosomal subunit protein uL14 (122 aa).

It belongs to the universal ribosomal protein uL14 family. Part of the 50S ribosomal subunit. Forms a cluster with proteins L3 and L19. In the 70S ribosome, L14 and L19 interact and together make contacts with the 16S rRNA in bridges B5 and B8.

In terms of biological role, binds to 23S rRNA. Forms part of two intersubunit bridges in the 70S ribosome. The chain is Large ribosomal subunit protein uL14 from Shewanella baltica (strain OS223).